The following is a 137-amino-acid chain: Basic phospholipase A2 homolog APL-K49 (137 aa).

An N-terminal signal peptide occupies residues 1-16 (MRTLWIVALLLVGVEG). Intrachain disulfides connect Cys42/Cys131, Cys44/Cys60, Cys59/Cys111, Cys65/Cys137, Cys66/Cys104, Cys73/Cys97, and Cys91/Cys102. The important for membrane-damaging activities in eukaryotes and bacteria; heparin-binding stretch occupies residues 121-133 (KKYKAYFKLKCKK).

It belongs to the phospholipase A2 family. Group II subfamily. K49 sub-subfamily. In terms of assembly, monomer. Expressed by the venom gland.

The protein resides in the secreted. Functionally, snake venom phospholipase A2 (PLA2) that lacks enzymatic activity. Does not show antibacterial activity. Is myotoxic and displays edema-inducing activities. A model of myotoxic mechanism has been proposed: an apo Lys49-PLA2 is activated by the entrance of a hydrophobic molecule (e.g. fatty acid) at the hydrophobic channel of the protein leading to a reorientation of a monomer. This reorientation causes a transition between 'inactive' to 'active' states, causing alignment of C-terminal and membrane-docking sites (MDoS) side-by-side and putting the membrane-disruption sites (MDiS) in the same plane, exposed to solvent and in a symmetric position for both monomers. The MDoS region stabilizes the toxin on membrane by the interaction of charged residues with phospholipid head groups. Subsequently, the MDiS region destabilizes the membrane with penetration of hydrophobic residues. This insertion causes a disorganization of the membrane, allowing an uncontrolled influx of ions (i.e. calcium and sodium), and eventually triggering irreversible intracellular alterations and cell death. This is Basic phospholipase A2 homolog APL-K49 from Agkistrodon piscivorus leucostoma (Western cottonmouth).